Reading from the N-terminus, the 129-residue chain is Glycine cleavage system H protein (129 aa).

Residues 24–106 form the Lipoyl-binding domain; it reads TFTVGISEHA…YGDGWLFRIK (83 aa). Position 65 is an N6-lipoyllysine (K65).

Belongs to the GcvH family. As to quaternary structure, the glycine cleavage system is composed of four proteins: P, T, L and H. Requires (R)-lipoate as cofactor.

The glycine cleavage system catalyzes the degradation of glycine. The H protein shuttles the methylamine group of glycine from the P protein to the T protein. This Pseudoalteromonas atlantica (strain T6c / ATCC BAA-1087) protein is Glycine cleavage system H protein.